Consider the following 373-residue polypeptide: tRNA-specific 2-thiouridylase MnmA (373 aa).

ATP contacts are provided by residues 12-19 (GMSGGVDS) and Met-38. An interaction with target base in tRNA region spans residues 98–100 (NPD). Cys-103 functions as the Nucleophile in the catalytic mechanism. A disulfide bond links Cys-103 and Cys-200. Gly-127 serves as a coordination point for ATP. The tract at residues 150–152 (KDQ) is interaction with tRNA. The Cysteine persulfide intermediate role is filled by Cys-200. Positions 312–313 (RY) are interaction with tRNA.

The protein belongs to the MnmA/TRMU family.

The protein localises to the cytoplasm. It carries out the reaction S-sulfanyl-L-cysteinyl-[protein] + uridine(34) in tRNA + AH2 + ATP = 2-thiouridine(34) in tRNA + L-cysteinyl-[protein] + A + AMP + diphosphate + H(+). Its function is as follows. Catalyzes the 2-thiolation of uridine at the wobble position (U34) of tRNA, leading to the formation of s(2)U34. The polypeptide is tRNA-specific 2-thiouridylase MnmA (Streptococcus pneumoniae (strain JJA)).